The sequence spans 166 residues: UPF0304 protein VV1_2093 (166 aa).

The protein belongs to the UPF0304 family.

In Vibrio vulnificus (strain CMCP6), this protein is UPF0304 protein VV1_2093.